The chain runs to 314 residues: Olfactory receptor 52B4 (314 aa).

The Extracellular segment spans residues 1–27; sequence MPTVNHSGTSHTVFHLLGIPGLQDQHM. Residue Asn5 is glycosylated (N-linked (GlcNAc...) asparagine). Residues 28–48 traverse the membrane as a helical segment; the sequence is WISIPFFISYVTALLGNSLLI. Over 49-56 the chain is Cytoplasmic; sequence FIILTKRS. Residues 57–77 traverse the membrane as a helical segment; it reads LHEPMYLFLCMLAGADIVLST. Topologically, residues 78–101 are extracellular; that stretch reads CTIPQALAIFWFRAGDISLDRCIT. The cysteines at positions 99 and 191 are disulfide-linked. A helical transmembrane segment spans residues 102 to 122; that stretch reads QLFFIHSTFISESGILLVMAF. The Cytoplasmic portion of the chain corresponds to 123-141; the sequence is DHYIAICYPLRYTTILTNA. Residues 142 to 162 traverse the membrane as a helical segment; sequence LIKKICVTVSLRSYGTIFPII. Topologically, residues 163–198 are extracellular; that stretch reads FLLKRLTFCQNNIIPHTFCEHIGLAKYACNDIRINI. The helical transmembrane segment at 199 to 219 threads the bilayer; sequence WYGFSILMSTVVLDVVLIFIS. Residues 220 to 239 lie on the Cytoplasmic side of the membrane; the sequence is YMLILHAVFHMPSPDACHKA. A helical transmembrane segment spans residues 240–260; the sequence is LNTFGSHVCIIILFYGSGIFT. The Extracellular portion of the chain corresponds to 261–275; the sequence is ILTQRFGRHIPPCIH. A helical membrane pass occupies residues 276-296; sequence IPLANVCILAPPMLNPIIYGI. Topologically, residues 297 to 314 are cytoplasmic; it reads KTKQIQEQVVQFLFIKQK.

Belongs to the G-protein coupled receptor 1 family.

The protein localises to the cell membrane. Functionally, odorant receptor. The chain is Olfactory receptor 52B4 (OR52B4) from Homo sapiens (Human).